Consider the following 324-residue polypeptide: MANERRTLLLEFEKPLVELEAQIQQVRDKSSEFGVDVSEQIRELEERAKQLRYEIFSKLTPGQTLQVARHPRRPSTLDYIQAISEEWIELHGDRRGSDDPAIVGGIGRLNDQPVVMLGQQKGRDTKDNVARNFGMASPGGYRKALRLMEHANRFQMPILTFIDTPAAWAGVDAEKFGQGEAIAYNLREMFRFEVPIICTVIGEGGSGGALAIGVGDRLLMFEHAVYSVAPPEACAAILWRDAQKAPQAAEALKITARDLLKLGIIDEIVPEPVGAAHSNPVEAAENLKAALLRNLAEVQALSSSERRELRYQKFRRMGVFTEAV.

Residues Leu44–Glu297 enclose the CoA carboxyltransferase C-terminal domain.

The protein belongs to the AccA family. Acetyl-CoA carboxylase is a heterohexamer composed of biotin carboxyl carrier protein (AccB), biotin carboxylase (AccC) and two subunits each of ACCase subunit alpha (AccA) and ACCase subunit beta (AccD).

The protein resides in the cytoplasm. The catalysed reaction is N(6)-carboxybiotinyl-L-lysyl-[protein] + acetyl-CoA = N(6)-biotinyl-L-lysyl-[protein] + malonyl-CoA. The protein operates within lipid metabolism; malonyl-CoA biosynthesis; malonyl-CoA from acetyl-CoA: step 1/1. Its function is as follows. Component of the acetyl coenzyme A carboxylase (ACC) complex. First, biotin carboxylase catalyzes the carboxylation of biotin on its carrier protein (BCCP) and then the CO(2) group is transferred by the carboxyltransferase to acetyl-CoA to form malonyl-CoA. This chain is Acetyl-coenzyme A carboxylase carboxyl transferase subunit alpha, found in Thermosynechococcus vestitus (strain NIES-2133 / IAM M-273 / BP-1).